Reading from the N-terminus, the 23-residue chain is Protein YsaE (23 aa).

This chain is Protein YsaE, found in Escherichia coli (strain K12).